The primary structure comprises 657 residues: MRTPLIDLRGIRKSYGGGDSPLVNVLRGIDLSIHTGEFVAIVGASGSGKSTLMNILGCLDRPTSGEYLFAGENVAALGSDELAWLRREAFGFVFQGYHLIPSGSAQENVEMPAIYAGTPAAERHARAAALLDRLGLASRTGNRPHQLSGGQQQRVSIARALMNGGHIILADEPTGALDSHSGAEVMTLLDELASQGHVVILITHDREVAARAKRVIEISDGLVISDTAQDASDVQRSVNPAALQAVDLRKRLSEGSGSQSAWQGELFDAIRAAWRVMWINRFRTALTLLGIVIGVASVVVMLAVGEGSKRQVMAQMSSFGSNIIYLNGKAPNPRAPKGVITLEEVAALGELPEVKMIMPVNGGQAGVRYGNLDHSSYVGGNDTHFPAIFNWPVVEGSYFSEADEQNAAAVAVIGYKVRQKLFGEQSDPVGQYILIENVPFQVVGVLQEKGATSGDLDSDNRIAIPYSSASIRLFGTQDPEYITIATRDANNVKQAEQSIRNLLQQLHHGKQDYELTNNAAMIQAEARTQNTLSLMLGSIAAISLLVGGIGVMNIMLMTVRERTREIGIRMATGARQSDILRQFLTEAVMLSVVGGLAGIVLALGMGAALLLSKVAVAFTLPAVAGAFACALITGVIFGFMPARKAARLDPVAALTSE.

Residues 6–245 (IDLRGIRKSY…RSVNPAALQA (240 aa)) enclose the ABC transporter domain. Residue 43–50 (GASGSGKS) participates in ATP binding. 4 consecutive transmembrane segments (helical) span residues 285–305 (ALTLLGIVIGVASVVVMLAVG), 539–559 (IAAISLLVGGIGVMNIMLMTV), 590–610 (LSVVGGLAGIVLALGMGAALL), and 620–640 (LPAVAGAFACALITGVIFGFM).

This sequence belongs to the ABC transporter superfamily. Macrolide exporter (TC 3.A.1.122) family. In terms of assembly, part of the tripartite efflux system PvdRT-OpmQ, which is composed of an inner membrane component with both ATPase and permease domains, PvdT, a periplasmic membrane fusion protein, PvdR, and an outer membrane component, OpmQ.

Its subcellular location is the cell inner membrane. Its function is as follows. Part of the tripartite efflux system PvdRT-OpmQ required for the secretion into the extracellular milieu of the siderophore pyoverdine (PVD), which is involved in iron acquisition. This subunit binds PVD and drives its secretion by hydrolyzing ATP. The system is responsible for export of newly synthesized PVD after the final steps of biosynthesis have taken place in the periplasm. It is also responsible for recycling of PVD after internalization of ferri-PVD into the periplasm by the outer-membrane receptor FpvA and release of iron from PVD, thus making PVD available for new cycles of iron uptake. This chain is Pyoverdine export ATP-binding/permease protein PvdT, found in Pseudomonas syringae pv. syringae (strain B728a).